We begin with the raw amino-acid sequence, 449 residues long: MKEQITICGAGLVGSLLAVYLIERGFSVRVFEKRKDPRKNEADAGRSINLAISHRGIHALKDAQTGLEKEALKLAVPMYGRAIHDLHGHVSFQAYGEASQHINSIGRGALNKLLITTAENLGVHFLFEHTCTDYHAAGEQWLFSDITGNTVATQSKEIVIGADGAFSIVRSFLSKQQQPQPQIETLEYGYKELEIASAHTETITNNQALHIWPRERFMLIALPNEDGSYTATLFLPLKGEISFEALQSDQDIQLFFKKYFPDTENLFPDLTEQFYRHPTSKLFTIHSSNWFNAHTLLIGDAAHALVPFYGQGMNAGFEDCRILAEIIDGKSKTNWSEIFAEFYNQRKENADAISDLALQNFIEMRDHVADASFLLRKKIEKHLHQELEDAFIPQYTMVSFTDISYKEAMETGLLHQKILDEIMAIPDIEAAWPTEELKNKVITVTKKYI.

The protein belongs to the aromatic-ring hydroxylase family. KMO subfamily. Requires FAD as cofactor.

The enzyme catalyses L-kynurenine + NADPH + O2 + H(+) = 3-hydroxy-L-kynurenine + NADP(+) + H2O. The protein operates within cofactor biosynthesis; NAD(+) biosynthesis; quinolinate from L-kynurenine: step 1/3. Its function is as follows. Catalyzes the hydroxylation of L-kynurenine (L-Kyn) to form 3-hydroxy-L-kynurenine (L-3OHKyn). Required for synthesis of quinolinic acid. In Cytophaga hutchinsonii (strain ATCC 33406 / DSM 1761 / CIP 103989 / NBRC 15051 / NCIMB 9469 / D465), this protein is Kynurenine 3-monooxygenase.